Consider the following 130-residue polypeptide: Sec-independent protein translocase protein TatB (130 aa).

The chain crosses the membrane as a helical span at residues 2-22 (FANIGWGEMLVLVVVGLVVLG). The tract at residues 108–130 (DAVASAQEAPDEPVRPPFDSDAT) is disordered.

Belongs to the TatB family. The Tat system comprises two distinct complexes: a TatABC complex, containing multiple copies of TatA, TatB and TatC subunits, and a separate TatA complex, containing only TatA subunits. Substrates initially bind to the TatABC complex, which probably triggers association of the separate TatA complex to form the active translocon.

It localises to the cell membrane. Functionally, part of the twin-arginine translocation (Tat) system that transports large folded proteins containing a characteristic twin-arginine motif in their signal peptide across membranes. Together with TatC, TatB is part of a receptor directly interacting with Tat signal peptides. TatB may form an oligomeric binding site that transiently accommodates folded Tat precursor proteins before their translocation. In Mycobacterium ulcerans (strain Agy99), this protein is Sec-independent protein translocase protein TatB.